The primary structure comprises 91 residues: Acylphosphatase (91 aa).

An Acylphosphatase-like domain is found at 5 to 91 (CLHAYVGGRV…QGIAGFVVRR (87 aa)). Active-site residues include Arg20 and Asn38.

The protein belongs to the acylphosphatase family.

The catalysed reaction is an acyl phosphate + H2O = a carboxylate + phosphate + H(+). The sequence is that of Acylphosphatase (acyP) from Pseudomonas aeruginosa (strain ATCC 15692 / DSM 22644 / CIP 104116 / JCM 14847 / LMG 12228 / 1C / PRS 101 / PAO1).